Reading from the N-terminus, the 872-residue chain is Serine/threonine-protein phosphatase 1 regulatory subunit 10 (872 aa).

The tract at residues 1–348 (MGSGPIDPKE…EPAAPAEPMD (348 aa)) is interaction with TOX4. Residues 73–147 (KLLNSWLTYS…SDWMAVIRSQ (75 aa)) form the TFIIS N-terminal domain. Disordered regions lie at residues 147–213 (QSST…STGL), 247–270 (SATAAPGDAAPPAEKKYKPLNTTP), 307–398 (KKKK…KRKT), and 534–837 (VETL…HGGD). Composition is skewed to basic and acidic residues over residues 153–166 (AEKDKKKRKEEGKS) and 174–196 (PLTEVKAETRAEEAPEKKKEKPK). A Glycyl lysine isopeptide (Lys-Gly) (interchain with G-Cter in SUMO2) cross-link involves residue Lys179. The segment covering 248–258 (ATAAPGDAAPP) has biased composition (low complexity). Lys262 participates in a covalent cross-link: Glycyl lysine isopeptide (Lys-Gly) (interchain with G-Cter in SUMO2). The residue at position 313 (Ser313) is a Phosphoserine. Over residues 325–336 (KTSTEPSTAKPS) the composition is skewed to low complexity. Positions 357–433 (PAVEVPELMD…NKIKDFGEAA (77 aa)) are necessary for interaction with PPP1CA. The residue at position 382 (Ser382) is a Phosphoserine. The tract at residues 393-408 (GRKRKTVTWPEEGKLR) is necessary for interaction with PPP1CC. Residues 394 to 423 (RKRKTVTWPEEGKLREYFYFELDETERVNV) carry the PP1-binding motif motif. Thr398 carries the phosphothreonine; by PKA modification. The tract at residues 418-619 (TERVNVNKIK…LKQMLVPHGL (202 aa)) is interaction with WDR82. Residues 540 to 551 (GGSGGSPDGAGG) are compositionally biased toward gly residues. Residues Ser545 and Ser591 each carry the phosphoserine modification. Residues 583-595 (EILTSIMGSPNNH) show a composition bias toward polar residues. Positions 596 to 611 (PSEELLKQPDYSDKLK) are enriched in basic and acidic residues. Residues 644–655 (PPGPGGPMPGPH) show a composition bias toward pro residues. Arg665 carries the post-translational modification Omega-N-methylarginine. Low complexity predominate over residues 674 to 690 (RGGDPFWDGPGDPMRGG). Omega-N-methylarginine occurs at positions 693 and 737. Residues 724–762 (ARGGRSGGGPPNGRGGPGGGGMVGGGGHRPHEGPGGSMG) show a composition bias toward gly residues. Basic and acidic residues predominate over residues 795–835 (PHDVPSHRGHDHRGPPPHEHRGHDGHGGGGHRGHDGGHSHG). The C3H1-type zinc finger occupies 838-866 (MSNRPVCRHFMMKGNCRYENNCAFYHPGV).

In terms of assembly, component of the PNUTS-PP1 complex (also named PTW/PP1 complex), composed of PPP1R10/PNUTS, TOX4, WDR82, and PPP1CA (or PPP1CB or PPP1CC). Post-translationally, phosphorylated on Thr-398 by PKA within the region necessary for interaction with PPP1CA. In terms of tissue distribution, expressed in testis, brain and intestine (at protein level). Highly expressed in testis.

Its subcellular location is the nucleus. It localises to the chromosome. Its function is as follows. Substrate-recognition component of the PNUTS-PP1 protein phosphatase complex, a protein phosphatase 1 (PP1) complex that promotes RNA polymerase II transcription pause-release, allowing transcription elongation. Promoter-proximal pausing by RNA polymerase II is a transcription halt following transcription initiation but prior to elongation, which acts as a checkpoint to control that transcripts are favorably configured for transcriptional elongation. The PNUTS-PP1 complex mediates the release of RNA polymerase II from promoter-proximal region of genes by catalyzing dephosphorylation of proteins involved in transcription, such as AFF4, CDK9, MEPCE, INTS12, NCBP1, POLR2M/GDOWN1 and SUPT6H. The PNUTS-PP1 complex also regulates RNA polymerase II transcription termination by mediating dephosphorylation of SUPT5H in termination zones downstream of poly(A) sites, thereby promoting deceleration of RNA polymerase II transcription. PNUTS-PP1 complex is also involved in the response to replication stress by mediating dephosphorylation of POLR2A at 'Ser-5' of the CTD, promoting RNA polymerase II degradation. The PNUTS-PP1 complex also plays a role in the control of chromatin structure and cell cycle progression during the transition from mitosis into interphase. PNUTS-PP1 complex mediates dephosphorylation of MYC, promoting MYC stability by preventing MYC ubiquitination by the SCF(FBXW7) complex. In addition to acts as a substrate-recognition component, PPP1R10/PNUTS also acts as a nuclear targeting subunit for the PNUTS-PP1 complex. In some context, PPP1R10/PNUTS also acts as an inhibitor of protein phosphatase 1 (PP1) activity by preventing access to substrates. The chain is Serine/threonine-protein phosphatase 1 regulatory subunit 10 from Rattus norvegicus (Rat).